The following is a 187-amino-acid chain: Elongation factor P (187 aa).

Belongs to the elongation factor P family.

It is found in the cytoplasm. It participates in protein biosynthesis; polypeptide chain elongation. Functionally, involved in peptide bond synthesis. Stimulates efficient translation and peptide-bond synthesis on native or reconstituted 70S ribosomes in vitro. Probably functions indirectly by altering the affinity of the ribosome for aminoacyl-tRNA, thus increasing their reactivity as acceptors for peptidyl transferase. This Magnetococcus marinus (strain ATCC BAA-1437 / JCM 17883 / MC-1) protein is Elongation factor P.